We begin with the raw amino-acid sequence, 4960 residues long: MSRFSCIFPTLTDGYVSNPDHTRAAGRRTYTIDLSGWKAPGSETEAHILAAWGLVLSSYVGTDEVAFYVVPTTGPDTTALADLKVEGDMSRQSLTYAAEQLLHPGLVGAGQVSGETANTIITFAKDIESLFVTQTEAANVGTAMAQALAEVGTCDNDRLIKDLNLMSPAHLEHIWRFNANVPGIWEESFHDVIERHATNRPHSPAVDAWDTKLTYADLVREARLLAAYLQQRGVGPGSVVPISFERSGAALVAMLAVSKAGGAFVSVPPNLPAGRLDAILDVIEAPFVVTWTRYESFWAERLPTLPIDNYPKPAADTTVEALGKPEDLFYVIFTSGSTGRPKGCMLSHSNWLNGALRNAPSWKYGPESRVLQMLSHTFDMSLLEICTSLGSGACVNHVIMTPSLARALRPDDVPELKTMCLGGEAFPKEIVTMWSERINLWQFYGPSECSINSSSRPITRPDADPLNIGPPNSAACWVADVHNYNKLVPVGAIGELLVSGPIVGMGYMKNPVKTAEAFLEEVGFVAKDDPQFGGFRFYRTGDLVRWNSDGTITFCGRADTQVKLNGQRLELAEVEYQLGLESGVQYAIAMAPQAGLCKNNLIAILTVKGTSTGNQDTAADEIPLLDRRDPIVQETVKKLRSQLQHALPRYMVPTIWAFVGRMPMSASGKIDRVQLRDWVQKMNQETFDAITGRSLEAEDHVLGLSRLEQEVQLAWAEALSLSAAEVGLQQPFVALGGDSIKALDAVARCRARQIKISMVHTLSCEGVREAASLAEVQETPAQQVAEMAVDYSNLWTRLSDDYDLDKLGVTQLEEVEDVFPCTTMQEGMFLGQIRRPGAYHMRFFHRVQLKGGCLPTVERIQQAWASLVERHPSLRTVFVDDLSPEAIYHSIVLRSVPMELRMREVPRDLRAEAALAMFTEELVPFRANAPLHRMLLLTCRGRVPYFMLEISHVIMDGYALSVFRREFIRACSSSAPLPRGPDYRMFANYHRTRQTDDSARYWTNYLADCVPCHIPTHAVSAPSDAPPEWPRTLQRRDFGFENSAAFLQRCKERQVTLACAIRAAWALVLRAYTQSEDVCFGYVSSGRNVPVPEVETIFGLCLSMQVCRARLSEASTIASLARKIQEDYAASLPFQHYPLAEAQRGLKQTHGQGLFNTAISMEWVPPSVEDEDALLDLEEICEQDDPTEYDIAISVDVHEGHIKLGFLYWPNLTDFEITHLAEALRGAMNRFAFQPDEALNTLSLLQASDVCSALADGPTLLPLEAVRGNVVSMIDRWVTRQPEGAAIDGWDGSLSYKELHEQSSWVARNLLHQGVQLGDRVLVSCEPDACWCSRTRRTQRSASNGWQKKCNAALIVADPTYEERFATAGARVLSTTTVCAPAAWDYEFPSLDEHDLVSILFTSGSTGTPKGILMEHGALATSVLLGHGRTLRFSRYTRMLHFASLTFDAALAEMFTTLAHGGCICVPCEDDRLSDVSGCISRFAVNTAMLTPSVGRLLDPGALLTLKTLIMVGEPMSRLDVERFAPVLDLYNGAGPTETSIMVTIAGPMEPTDEPVNLGYAVAGVRLWVTEAENPNRLAPLGAVGELIVEGRLVTRGYLDGPARTQEAFLPSLPWLPSQHALYRTGDLVRYADDGSLRYMGRKDTQVKLRGQRIELQEVEYHLRKSLQQAQIVVEMVVPAGKMRAQASLVAFVSGLTAEDVESSSACNLEGTILISQIVLPKSAFQALEEVLPRHMIPSVYNALDTIPLSVNGKADRRRLLPPIRTPLKESKSVKWTPASELERTLLELWAATLGLEAETIHGDDSFFELGGDFVSAMKLVATARDKFKLSLSVPQMFRYPTICHLAAEVGEPAGQSASSASSTTEEGFTFSTPDDSSTNDGVDDDFLELVTAQLAQLAQEKGKKVDIAALLKQLQGGSSSNKTPSVSSSSSSSSSSKRKKNAAKAESLAEAAAPIPVQFSLLDGGADALDKVRAQAVEHCKITHEDIEDIYPATALQEGMMALTARTPGVYTTSLTGNLSELVDLAWLQYAWGKAAEAHPILRTRIILTDNNTAVQVVQRAKGLPWDTYSLREDDVLPDLTSNMTSGSPLLRLALVHRQNQPRMLLVAIHHALYDGWSMPLLKQAVEDAYHGRDLRSQPFTPFIKHLIAGKPAAQDFWTTHLDSFVGGIFPKLPSIYHQIQPTKRRTRPMTLPTAAPKAQYTMATKIQAAWAVTVPRYAEVNDIVFGTVSTGRSAPVPAIDRMVGPTITTVPVRISLGDQADRVLSLLQRVQEDSWNKLDHEHLGLQHIRHLGESAAAACSFQTLLVILPREQPDTKYRSTLLSGLQDVAELEGVDTYPLMLVCEPDSARLHLTAVFDRAVLDGATLDRMLAHWELVLTQMWNEPDMAVIEIDAVSCSDKETLMRWNTGETIPDGCAHDAVCEWSRRTPHAPAVCAWDGDWTYEELERCSSLVASQIFAHGLSSGDFVALYHEKSRWTAAGILALFKAGAILITLDPAHPTDRIKDILDQARPRLILTSQSLLDVARNLETPVLSVQLAASQPLPEGWSSLPTISPTLAAYAPFTSGSTGRPKGIPLDHRGLAASTASIARSCLLRPASRVLHFASFAFDASMMEQLIAWHAGGCLCIPDETARQTDLAKCIRDFNVTWAFLAPSCLRLITPDDVPSLQALGLGGESMTSEDITIWSPRLRQIIQLYGPAECCIVAALTEVTKPSENRLIGRPNACRCWVVDPQNPDRLAPIGAVGELLIEGITVGRGYINDPDRTTPAFIRPPKWLQTLYPDDQEPKRLYRTGDLVRYAGVDGKLAFIGRRDGQLKLHGQRTELADVEAHLRSLIPGMQKMVVEMVHSADNQSPFLAAFLEEISTSQKPKEREIGLLHLSQSQCALDVKAIDSALSRTVPQYMIPSMYLHISRLPLSASGKLDRRHLREMVAELPHQRINEYAAGSGLSVPDRPVTSQEREMQAIWARVLSLDPNTIGVNDDFFRIGGDSISGMQVSTKCNAAGIHITSADLFRHRTIEQLICHINTIRTTDCASVSLPTEPVDEWVALAPIQQLFFEVAPEGPNHFNQSLLLRTSRRVGVEELAGGLDILIGRYSMLRARFCRKDSGQWFQQVKSLDSEPVSAFYRLAAHNQITRESLPTLFTAAQMALSIEDGPLLTVDLVELKDGSQLVYLAAHHLIIDLVSWRILHGDLEEYLQTGSLSSATGSVPFLTWTQLQAEYSAEHLTPARALPGFQEANDDFDVMRYWGISSESNTFGQTSTSRFTLDRTVTDILFGSANKVMDTRPVEILQAALWYSCNQALTDHPGPRIYVEGHGREPWTDSIDVSGTVGWFTIMSPLVSTPWHHLSRKSMRDFVDVLSYIKDQRRRIPANGWAYFTSHYLNDEGRVAYGRTKPVMEVLFNYMGQYQEMKREDAMLQLAGDDVQSGTGASDIADNVPRFSLIDVTAFTANGCLTFEFTFPQLIQQDARLEHCIKESFDGPTCPRRLEYLPLLSRATGHVVGAAARSAGISATIQVSGYVSRANRPTFIGKVSDHSHFDQVVMVPGSLQHLVRGDAMDANPTEGLPHTINITSDSTGAIICEWNVSHALVDAMSIAVIQREVNQALEGSLGQHQNLPQYVEYIEWLTLQDNTEAQAYWQKYLDGVEPCLFPKLTSSPDKVNPEATIAAIRATWSRDARMDELCHKHAITLTNLFHIVWAIVLGAYVGTDEVCFGYTALGRDVPVHRVETMVGPLVNVLATTVRHEENETILNALLTHQAHLTNSLQHQHYALADVYAALGLVGSQLFNAIVSLQDTSHFDAPDEQRTRLEMLPANDVSEYDVALNIGVDKSSIQLVRSYQTVSLSAEQADALLRTAFHVLDEILRDPTQRFCELEVISPKCKEQLVKWNAGMLAPTDEYIHEKIQGQCRIHNSRQAVCAWDGIFTYAEVDDLSSRLAARLIRMGVTSEDIIPIYSPKSRWTVIAILGVLKAGAAFTLLETSHPMARLHVICNQIKAPMIIAPASHAIPAANLAPILVVLDKIMSLAQERPVPLPAVGIPPAREALAYLIFTSGSTGNPKVVMVTHQNLCSNASIITTSVNMTSDSRVLQFASHAFDACILGLLGALIAGACLIIPSESENKEDLAGCMERMDVTWALLTPSVARILKPETLPRLLNLVLGGEPIAASDLDMWRGHVQVVCAYGPTETTIVASTTSPSTFPMDGKNIGVPSGSSLWVVSRQNYQKLAPLGATGELLIEGPNVSLGYLGDPGKANKAFPDSPIWLSQLRKSPTRVYRTGDLVRFDTTTGTIRFVGRKDNQIKFHGQRIELGEIEHHAQLAFSSASMVIVDLITPEQPQQPYIVAFVHQSDAANETTDTNDTLLLPPSEAFRADALAAQNKMYERLPHYMVPAVFLPLHRLPLSVTGKADRKRLRQCALALSSPELSAYRATASRKRMPSTAAERKMQGLVATVLGRDPTEIGMDDSFFYLGGDSVQAMRLVAEGRQQGLTLSLRAIFDSPCLGDLSDQAKSLIEDNQRASTASRGNLRYDCDQIDKIVATKSLNKTDVVDVLPTTSFQHHWLDAQLKSYIVADISGPIDPARLLRAMHRVVEAHPILRVSFVPYENTTMQVILNKAVAIKSADPSNTTVEEICRQDADTPTVPGMPYLRVILATQVEADHTLILRLSHAQYDAVSLSLLMNDLGHAYANETHPLPSSHFPRFNDYTTYQQAQRADPTAITFWRHLLQDVSLTYLNLQPAESSASNGTPITLSRDIDIAIFPSLPSDITIATTVKAAWSLVLAQKTNSPAVIFGQVVHGRAIALPGVEGIIGPCANITPVVARLGLQTTGLELMQTLQDQHRSAMPYETVDLDDALAYAKDSQAGRKGLQTIVQHQNNVMVDDMELSLGEVKCGVDVRAVDHLPKEVWVYSSVDEKRPGMLEVKIMSSTLVLGEEVAEELMGLLVEKIVGLLRHPESVCF.

The segment at 194-564 (ERHATNRPHS…CGRADTQVKL (371 aa)) is adenylation 1. The Carrier 1 domain occupies 705-778 (SRLEQEVQLA…EAASLAEVQE (74 aa)). Ser-739 bears the O-(pantetheine 4'-phosphoryl)serine mark. Residues 816-1247 (EDVFPCTTMQ…ALNTLSLLQA (432 aa)) are condensation 1. The interval 1275–1650 (DRWVTRQPEG…GRKDTQVKLR (376 aa)) is adenylation 2. A Carrier 2 domain is found at 1777–1854 (TPASELERTL…HLAAEVGEPA (78 aa)). Disordered stretches follow at residues 1855-1883 (GQSA…NDGV) and 1917-1943 (GGSS…KKNA). Composition is skewed to low complexity over residues 1857–1881 (SASS…STND) and 1919–1936 (SSSN…SSSS). The condensation 2 stretch occupies residues 1989–2404 (EDIYPATALQ…AVSCSDKETL (416 aa)). Positions 2427 to 2819 (RRTPHAPAVC…IGRRDGQLKL (393 aa)) are adenylation 3. Residues 2955-3031 (RPVTSQEREM…QLICHINTIR (77 aa)) enclose the Carrier 3 domain. The residue at position 2992 (Ser-2992) is an O-(pantetheine 4'-phosphoryl)serine. 2 condensation regions span residues 3049–3464 (VALA…FTFP) and 3520–3889 (SGYV…EQLV). An adenylation 4 region spans residues 3914–4304 (HNSRQAVCAW…VGRKDNQIKF (391 aa)). Positions 4438–4514 (MPSTAAERKM…DLSDQAKSLI (77 aa)) constitute a Carrier 4 domain. The residue at position 4475 (Ser-4475) is an O-(pantetheine 4'-phosphoryl)serine. Positions 4551-4878 (DVLPTTSFQH…LQTIVQHQNN (328 aa)) are condensation 5.

The protein belongs to the NRP synthetase family.

It participates in secondary metabolite biosynthesis. In terms of biological role, nonribosomal peptide synthetase; part of the gene cluster that mediates the biosynthesis of malformins, cyclic pentapeptides with a disulfide bond between 2 consecutive cysteins, that show potential anti-tumor as well as antimalarial and antitrypanosomal properties. The nonribosomal peptide synthetase mlfA is responsible of the formation of the cyclic pentapeptide. The malformin biosynthesis clusters in malformin-producing fungi also contain enzymes involved in the formation of the disulfide bond between the two consecutive cysteins within malformins, in addition to additional tailoring enzymes such as methyltransferases or oxidoreductases. They are also composed of up to 4 major facilitator superfamily transporters, and transcription factors probably involved in the regulation of the expression of those clusters. The protein is Malformin synthetase mlfA of Aspergillus neoniger (strain CBS 115656).